We begin with the raw amino-acid sequence, 339 residues long: D-alanine--D-alanine ligase (339 aa).

One can recognise an ATP-grasp domain in the interval 126-333 (KQVLDSAGIP…YSELVTRLVE (208 aa)). An ATP-binding site is contributed by 158-213 (AAELGYPLFVKPANLGSSVGISKVGSPEELDAALTLAFGLDRRVILEAMTPHKPRE). Mg(2+) is bound by residues D286, E300, and N302.

The protein belongs to the D-alanine--D-alanine ligase family. Mg(2+) serves as cofactor. Mn(2+) is required as a cofactor.

It is found in the cytoplasm. It catalyses the reaction 2 D-alanine + ATP = D-alanyl-D-alanine + ADP + phosphate + H(+). It functions in the pathway cell wall biogenesis; peptidoglycan biosynthesis. In terms of biological role, cell wall formation. The polypeptide is D-alanine--D-alanine ligase (Deinococcus radiodurans (strain ATCC 13939 / DSM 20539 / JCM 16871 / CCUG 27074 / LMG 4051 / NBRC 15346 / NCIMB 9279 / VKM B-1422 / R1)).